We begin with the raw amino-acid sequence, 171 residues long: Lipoprotein signal peptidase (171 aa).

A run of 3 helical transmembrane segments spans residues 7–27 (GLIA…WLYF), 64–84 (LGRW…SVWM), and 88–108 (GSRL…GNAI). Catalysis depends on residues Asp118 and Asp136. A helical transmembrane segment spans residues 128–148 (SWYVFNVADAAIVAGVVGLIL).

The protein belongs to the peptidase A8 family.

It is found in the cell inner membrane. The enzyme catalyses Release of signal peptides from bacterial membrane prolipoproteins. Hydrolyzes -Xaa-Yaa-Zaa-|-(S,diacylglyceryl)Cys-, in which Xaa is hydrophobic (preferably Leu), and Yaa (Ala or Ser) and Zaa (Gly or Ala) have small, neutral side chains.. The protein operates within protein modification; lipoprotein biosynthesis (signal peptide cleavage). Its function is as follows. This protein specifically catalyzes the removal of signal peptides from prolipoproteins. The protein is Lipoprotein signal peptidase of Methylorubrum extorquens (strain PA1) (Methylobacterium extorquens).